We begin with the raw amino-acid sequence, 128 residues long: Glycoprotein hormone alpha-2 (128 aa).

The signal sequence occupies residues 1–20 (MPMAPRVLLLCLLGLAVTEG). 4 disulfide bridges follow: Cys-30/Cys-88, Cys-47/Cys-102, Cys-56/Cys-118, and Cys-60/Cys-120. N-linked (GlcNAc...) asparagine glycosylation is found at Asn-36 and Asn-80.

It belongs to the glycoprotein hormones subunit alpha family. In terms of assembly, heterodimer with GPHB5; this heterodimer interacts with thyroid-stimulating hormone receptor (TSHR), and hence stimulates cAMP production.

Its subcellular location is the secreted. Its function is as follows. Functions as a heterodimeric glycoprotein hormone with GPHB5 able to bind and activate the thyroid-stimulating hormone receptor (TSHR), leading to increased cAMP production. Plays a central role in controlling thyroid cell metabolism. In Mus musculus (Mouse), this protein is Glycoprotein hormone alpha-2 (Gpha2).